We begin with the raw amino-acid sequence, 1197 residues long: DNA-directed RNA polymerase subunit beta (1197 aa).

Over residues Gln-581–Val-597 the composition is skewed to polar residues. Disordered stretches follow at residues Gln-581–Asp-603 and Glu-1172–Val-1197.

This sequence belongs to the RNA polymerase beta chain family. The RNAP catalytic core consists of 2 alpha, 1 beta, 1 beta' and 1 omega subunit. When a sigma factor is associated with the core the holoenzyme is formed, which can initiate transcription.

The enzyme catalyses RNA(n) + a ribonucleoside 5'-triphosphate = RNA(n+1) + diphosphate. In terms of biological role, DNA-dependent RNA polymerase catalyzes the transcription of DNA into RNA using the four ribonucleoside triphosphates as substrates. This Oenococcus oeni (strain ATCC BAA-331 / PSU-1) protein is DNA-directed RNA polymerase subunit beta.